We begin with the raw amino-acid sequence, 122 residues long: Acyl carrier protein 1, mitochondrial (122 aa).

The transit peptide at 1–34 (MALRNAILRHLRVPVQTLGLNQSKIGFLGTIRSF) directs the protein to the mitochondrion. The 76-residue stretch at 44–119 (EAVVDRVLDV…LAIEYVYNHP (76 aa)) folds into the Carrier domain. Ser79 bears the O-(pantetheine 4'-phosphoryl)serine mark.

Belongs to the acyl carrier protein (ACP) family. As to quaternary structure, complex I is composed of at least 49 different subunits. In terms of processing, 4'-phosphopantetheine is transferred from CoA to a specific serine of the apo-ACP-like protein.

It localises to the mitochondrion. Its pathway is lipid metabolism; fatty acid biosynthesis. Its function is as follows. Carrier of the growing fatty acid chain in fatty acid biosynthesis. May be involved in the synthesis of short and medium chain fatty acids. Accessory and non-catalytic subunit of the mitochondrial membrane respiratory chain NADH dehydrogenase (Complex I), which functions in the transfer of electrons from NADH to the respiratory chain. This is Acyl carrier protein 1, mitochondrial (MTACP1) from Arabidopsis thaliana (Mouse-ear cress).